A 732-amino-acid chain; its full sequence is Ionotropic receptor 40a (732 aa).

A signal peptide spans 1–19 (MHKFLALGLLPYLLGLLNS). Residues N18, N235, and N299 are each glycosylated (N-linked (GlcNAc...) asparagine). Residues 20-369 (TRLTFIGNDE…RPFKQDIWPH (350 aa)) are Extracellular-facing. A helical membrane pass occupies residues 370-390 (LILTIIFSGPIFYGIIALPYI). At 391-465 (WRRRWANSDV…NELHNGYRAK (75 aa)) the chain is on the cytoplasmic side. A helical membrane pass occupies residues 466-486 (FLTIVYWIAATYVLADVYSAQ). Residues 487 to 688 (LTSQFARPAR…LNLRMLQGAF (202 aa)) lie on the Extracellular side of the membrane. Residue N531 is glycosylated (N-linked (GlcNAc...) asparagine). Residues 689 to 709 (IALGVGSLAAGVILLLEIVFI) form a helical membrane-spanning segment. Topologically, residues 710–732 (KLDQARLWMLCSRLQWIRYDRKV) are cytoplasmic.

The protein belongs to the glutamate-gated ion channel (TC 1.A.10.1) family. In the antenna, detected in sacculus neurons which innervate the first and second chambers (at protein level).

The protein resides in the cell membrane. Integral part of a neural sensory system in the antenna that provides the neural basis for the response to environmental changes in humidity (hygrosensation). Together with Ir25a and Ir93a, mediates the response of the hygrosensory sacculus neurons to changes in relative humidity and is required for dry detection behavior. The protein is Ionotropic receptor 40a of Drosophila melanogaster (Fruit fly).